Here is an 86-residue protein sequence, read N- to C-terminus: Putative membrane protein insertion efficiency factor (86 aa).

The segment at 66 to 86 (PLHEGGDDPVPPRKNDDNREN) is disordered.

Belongs to the UPF0161 family.

It is found in the cell inner membrane. Functionally, could be involved in insertion of integral membrane proteins into the membrane. In Proteus mirabilis (strain HI4320), this protein is Putative membrane protein insertion efficiency factor.